A 936-amino-acid chain; its full sequence is Protein NLP2 (936 aa).

Residues 99–130 (IMSVNPTEAEKTGKSSGELGSDDGAHQGSSMV) are disordered. An RWP-RK domain is found at 550-635 (QPSSIGHAEK…INSVHGVDRS (86 aa)). Disordered regions lie at residues 666 to 697 (PSVGKTVEENSDLKSEEGCSLPDGSQRQSCQL), 753 to 782 (CTNPSSSLRPSSESTRNQIVGRNSPSIQQE), and 794 to 827 (DKDHMHPSTSGMTDSSSGSASSHPTFKQNTRSAL). Residues 671–682 (TVEENSDLKSEE) show a composition bias toward basic and acidic residues. Over residues 688–697 (DGSQRQSCQL) the composition is skewed to polar residues. The span at 754–769 (TNPSSSLRPSSESTRN) shows a compositional bias: low complexity. Residues 770–781 (QIVGRNSPSIQQ) are compositionally biased toward polar residues. Positions 801–815 (STSGMTDSSSGSASS) are enriched in low complexity. Over residues 816 to 825 (HPTFKQNTRS) the composition is skewed to polar residues. The region spanning 834 to 916 (ALTVKATYNG…RIVKLQVRDL (83 aa)) is the PB1 domain.

It localises to the nucleus. Functionally, probable transcription factor. The chain is Protein NLP2 from Oryza sativa subsp. japonica (Rice).